The chain runs to 285 residues: Bifunctional protein FolD (285 aa).

NADP(+) is bound by residues 163–165 and Ser188; that span reads GRS.

It belongs to the tetrahydrofolate dehydrogenase/cyclohydrolase family. In terms of assembly, homodimer.

It carries out the reaction (6R)-5,10-methylene-5,6,7,8-tetrahydrofolate + NADP(+) = (6R)-5,10-methenyltetrahydrofolate + NADPH. The catalysed reaction is (6R)-5,10-methenyltetrahydrofolate + H2O = (6R)-10-formyltetrahydrofolate + H(+). Its pathway is one-carbon metabolism; tetrahydrofolate interconversion. Catalyzes the oxidation of 5,10-methylenetetrahydrofolate to 5,10-methenyltetrahydrofolate and then the hydrolysis of 5,10-methenyltetrahydrofolate to 10-formyltetrahydrofolate. This Lactococcus lactis subsp. cremoris (strain MG1363) protein is Bifunctional protein FolD.